Consider the following 287-residue polypeptide: L-cysteine S-thiosulfotransferase subunit SoxA (287 aa).

The N-terminal stretch at 1–26 (MKTMTGRLVAAALVCGGAFSGAAVSA) is a signal peptide. The Cytochrome c domain maps to 74–168 (DDFENSGMVF…AMVALIASVS (95 aa)). Heme c-binding residues include cysteine 102, cysteine 105, histidine 106, cysteine 140, cysteine 203, cysteine 206, and histidine 207. Substrate is bound at residue arginine 244. Cysteine 248 lines the heme c pocket. Cysteine 248 functions as the Cysteine persulfide intermediate in the catalytic mechanism.

The protein belongs to the SoxA family. In terms of assembly, heterodimer of SoxA and SoxX. Heme c is required as a cofactor. Cysteine persulfide at Cys-248.

It localises to the periplasm. The enzyme catalyses L-cysteinyl-[SoxY protein] + thiosulfate + 2 Fe(III)-[cytochrome c] = S-sulfosulfanyl-L-cysteinyl-[SoxY protein] + 2 Fe(II)-[cytochrome c] + 2 H(+). The catalysed reaction is S-sulfanyl-L-cysteinyl-[SoxY protein] + thiosulfate + 2 Fe(III)-[cytochrome c] = S-(2-sulfodisulfanyl)-L-cysteinyl-[SoxY protein] + 2 Fe(II)-[cytochrome c] + 2 H(+). Its function is as follows. C-type diheme cytochrome, which is part of the SoxAX cytochrome complex involved in sulfur oxidation. The SoxAX complex catalyzes the formation of a heterodisulfide bond between the conserved cysteine residue on a sulfur carrier SoxYZ complex subunit SoxY and thiosulfate or other inorganic sulfur substrates. This leads to the liberation of two electrons, which may be transferred from the SoxAX complex to another cytochrome c and which then may be used for reductive CO(2) fixation. The polypeptide is L-cysteine S-thiosulfotransferase subunit SoxA (Rhodovulum sulfidophilum (Rhodobacter sulfidophilus)).